The primary structure comprises 266 residues: Phosphatidylserine decarboxylase proenzyme (266 aa).

Residues Asp-74, His-135, and Ser-237 each act as charge relay system; for autoendoproteolytic cleavage activity in the active site. Ser-237 (schiff-base intermediate with substrate; via pyruvic acid; for decarboxylase activity) is an active-site residue. The residue at position 237 (Ser-237) is a Pyruvic acid (Ser); by autocatalysis.

The protein belongs to the phosphatidylserine decarboxylase family. PSD-B subfamily. Prokaryotic type I sub-subfamily. As to quaternary structure, heterodimer of a large membrane-associated beta subunit and a small pyruvoyl-containing alpha subunit. Pyruvate serves as cofactor. Post-translationally, is synthesized initially as an inactive proenzyme. Formation of the active enzyme involves a self-maturation process in which the active site pyruvoyl group is generated from an internal serine residue via an autocatalytic post-translational modification. Two non-identical subunits are generated from the proenzyme in this reaction, and the pyruvate is formed at the N-terminus of the alpha chain, which is derived from the carboxyl end of the proenzyme. The autoendoproteolytic cleavage occurs by a canonical serine protease mechanism, in which the side chain hydroxyl group of the serine supplies its oxygen atom to form the C-terminus of the beta chain, while the remainder of the serine residue undergoes an oxidative deamination to produce ammonia and the pyruvoyl prosthetic group on the alpha chain. During this reaction, the Ser that is part of the protease active site of the proenzyme becomes the pyruvoyl prosthetic group, which constitutes an essential element of the active site of the mature decarboxylase.

It localises to the cell membrane. It catalyses the reaction a 1,2-diacyl-sn-glycero-3-phospho-L-serine + H(+) = a 1,2-diacyl-sn-glycero-3-phosphoethanolamine + CO2. The protein operates within phospholipid metabolism; phosphatidylethanolamine biosynthesis; phosphatidylethanolamine from CDP-diacylglycerol: step 2/2. In terms of biological role, catalyzes the formation of phosphatidylethanolamine (PtdEtn) from phosphatidylserine (PtdSer). In Campylobacter jejuni subsp. jejuni serotype O:2 (strain ATCC 700819 / NCTC 11168), this protein is Phosphatidylserine decarboxylase proenzyme.